The chain runs to 476 residues: Inosine-5'-monophosphate dehydrogenase (476 aa).

2 consecutive CBS domains span residues methionine 92 to valine 150 and methionine 151 to serine 207. Residues aspartate 244 and glycine 294–glycine 296 contribute to the NAD(+) site. Glycine 296 and glycine 298 together coordinate K(+). Serine 299 contacts IMP. Residue cysteine 301 participates in K(+) binding. Cysteine 301 functions as the Thioimidate intermediate in the catalytic mechanism. IMP is bound by residues aspartate 334 to glycine 336, glycine 357 to serine 358, tyrosine 381 to alanine 385, and glutamate 413. K(+)-binding residues include glutamate 467 and serine 468.

This sequence belongs to the IMPDH/GMPR family. In terms of assembly, homotetramer. The cofactor is K(+).

It catalyses the reaction IMP + NAD(+) + H2O = XMP + NADH + H(+). It participates in purine metabolism; XMP biosynthesis via de novo pathway; XMP from IMP: step 1/1. Mycophenolic acid (MPA) is a non-competitive inhibitor that prevents formation of the closed enzyme conformation by binding to the same site as the amobile flap. In contrast, mizoribine monophosphate (MZP) is a competitive inhibitor that induces the closed conformation. MPA is a potent inhibitor of mammalian IMPDHs but a poor inhibitor of the bacterial enzymes. MZP is a more potent inhibitor of bacterial IMPDH. Catalyzes the conversion of inosine 5'-phosphate (IMP) to xanthosine 5'-phosphate (XMP), the first committed and rate-limiting step in the de novo synthesis of guanine nucleotides, and therefore plays an important role in the regulation of cell growth. The sequence is that of Inosine-5'-monophosphate dehydrogenase from Nitrosopumilus maritimus (strain SCM1).